The following is a 608-amino-acid chain: Elongation factor 4 (608 aa).

One can recognise a tr-type G domain in the interval 11–193 (DRIRNFSIIA…QIVQKIPAPS (183 aa)). GTP-binding positions include 23–28 (DHGKST) and 140–143 (NKID).

It belongs to the TRAFAC class translation factor GTPase superfamily. Classic translation factor GTPase family. LepA subfamily.

The protein localises to the cell membrane. It carries out the reaction GTP + H2O = GDP + phosphate + H(+). In terms of biological role, required for accurate and efficient protein synthesis under certain stress conditions. May act as a fidelity factor of the translation reaction, by catalyzing a one-codon backward translocation of tRNAs on improperly translocated ribosomes. Back-translocation proceeds from a post-translocation (POST) complex to a pre-translocation (PRE) complex, thus giving elongation factor G a second chance to translocate the tRNAs correctly. Binds to ribosomes in a GTP-dependent manner. This Anoxybacillus flavithermus (strain DSM 21510 / WK1) protein is Elongation factor 4.